A 94-amino-acid chain; its full sequence is Small nuclear ribonucleoprotein E (94 aa).

A Sm domain is found at 14–94; the sequence is INCIFNFLQQ…DNITLITSAD (81 aa).

This sequence belongs to the snRNP Sm proteins family. Component of the Sm core complex, present in spliceosomal snRNP U1, U2, U4/U6 and U5. The core complex contains SMB1, SMD1, SMD2, SMD3, SME1, SMX3 and SMX2 (Sm proteins B, D1, D2, D3, E, F and G, respectively), and is probably a heptameric ring structure. SME1 specifically interacts with SMX2 and SMX3. Component of the U4/U6-U5 tri-snRNP complex composed of the U4, U6 and U5 snRNAs and at least PRP3, PRP4, PRP6, PRP8, PRP18, PRP31, PRP38, SNU13, SNU23, SNU66, SNU114, SPP381, SMB1, SMD1, SMD2, SMD3, SMX2, SMX3, LSM2, LSM3, LSM4, LSM5, LSM6, LSM7, LSM8, BRR2 and DIB1.

The protein resides in the cytoplasm. The protein localises to the nucleus. Functionally, involved in pre-mRNA splicing. Binds and is required for the stability of snRNA U1, U2, U4 and U5 which contain a highly conserved structural motif called the Sm binding site. Involved in cap modification. This chain is Small nuclear ribonucleoprotein E (SME1), found in Saccharomyces cerevisiae (strain ATCC 204508 / S288c) (Baker's yeast).